The chain runs to 125 residues: MPSLNQLIRHGREEKRRTDRTRALDQCPQKQGVCPRVSTRTPKKPNSAPRKIAKVRLSNRHDIFAHIPGEGHNLQEHSMVLIRGGRVKDSPGVKSHCIRGVKDLLGIPDRRRGRSKYGAEKPKSI.

Residues 1 to 50 form a disordered region; sequence MPSLNQLIRHGREEKRRTDRTRALDQCPQKQGVCPRVSTRTPKKPNSAPR. Basic and acidic residues predominate over residues 10–23; sequence HGREEKRRTDRTRA.

This sequence belongs to the universal ribosomal protein uS12 family.

The protein localises to the mitochondrion. In terms of biological role, protein S12 is involved in the translation initiation step. This chain is Small ribosomal subunit protein uS12m (RPS12), found in Petunia hybrida (Petunia).